We begin with the raw amino-acid sequence, 180 residues long: Small ribosomal subunit protein uS4 (180 aa).

Residues 103–174 (RRLQTIVYKK…HPERMMIEKA (72 aa)) form the S4 RNA-binding domain.

Belongs to the universal ribosomal protein uS4 family. As to quaternary structure, part of the 30S ribosomal subunit. Contacts protein S5. The interaction surface between S4 and S5 is involved in control of translational fidelity.

Its function is as follows. One of the primary rRNA binding proteins, it binds directly to 16S rRNA where it nucleates assembly of the body of the 30S subunit. Functionally, with S5 and S12 plays an important role in translational accuracy. The polypeptide is Small ribosomal subunit protein uS4 (Pyrococcus abyssi (strain GE5 / Orsay)).